The chain runs to 178 residues: Adenine phosphoribosyltransferase (178 aa).

This sequence belongs to the purine/pyrimidine phosphoribosyltransferase family. In terms of assembly, homodimer.

It is found in the cytoplasm. The catalysed reaction is AMP + diphosphate = 5-phospho-alpha-D-ribose 1-diphosphate + adenine. Its pathway is purine metabolism; AMP biosynthesis via salvage pathway; AMP from adenine: step 1/1. In terms of biological role, catalyzes a salvage reaction resulting in the formation of AMP, that is energically less costly than de novo synthesis. In Cereibacter sphaeroides (strain ATCC 17025 / ATH 2.4.3) (Rhodobacter sphaeroides), this protein is Adenine phosphoribosyltransferase.